The sequence spans 378 residues: 8-demethyl-8-alpha-L-rhamnosyl tetracenomycin-C 2'-O-methyltransferase (378 aa).

Residues 195 to 201 (EIGVGGY), Ser-210, Asp-227, 245 to 246 (DQ), and Asp-268 each bind S-adenosyl-L-methionine. Position 268 (Asp-268) interacts with Mg(2+). His-271 serves as the catalytic Proton acceptor. 2 residues coordinate Mg(2+): Glu-296 and Asp-297.

Belongs to the methyltransferase OleY/MycE family. It depends on Mg(2+) as a cofactor.

The catalysed reaction is 8-demethyl-8-alpha-L-rhamnosyl-tetracenomycin C + S-adenosyl-L-methionine = 8-demethyl-8-(2-O-methyl-alpha-L-rhamnosyl)-tetracenomycin C + S-adenosyl-L-homocysteine + H(+). The protein operates within antibiotic biosynthesis. Functionally, O-methyltransferase involved in the biosynthesis of the permethylated L-rhamnose moiety of elloramycin, an antitumor polyketide. Mediates the methylation of the hydroxy groups at the 2'-position after the sugar moiety has been attached to the aglycon. The sequence is that of 8-demethyl-8-alpha-L-rhamnosyl tetracenomycin-C 2'-O-methyltransferase from Streptomyces olivaceus.